The following is a 499-amino-acid chain: Probable cytosol aminopeptidase (499 aa).

Mn(2+)-binding residues include Lys267 and Asp272. The active site involves Lys279. Residues Asp290, Asp349, and Glu351 each coordinate Mn(2+). Residue Arg353 is part of the active site.

The protein belongs to the peptidase M17 family. Mn(2+) serves as cofactor.

Its subcellular location is the cytoplasm. It catalyses the reaction Release of an N-terminal amino acid, Xaa-|-Yaa-, in which Xaa is preferably Leu, but may be other amino acids including Pro although not Arg or Lys, and Yaa may be Pro. Amino acid amides and methyl esters are also readily hydrolyzed, but rates on arylamides are exceedingly low.. The enzyme catalyses Release of an N-terminal amino acid, preferentially leucine, but not glutamic or aspartic acids.. Presumably involved in the processing and regular turnover of intracellular proteins. Catalyzes the removal of unsubstituted N-terminal amino acids from various peptides. The polypeptide is Probable cytosol aminopeptidase (Alkaliphilus oremlandii (strain OhILAs) (Clostridium oremlandii (strain OhILAs))).